The sequence spans 290 residues: Membrane protein insertase YidC (290 aa).

An N-terminal signal peptide occupies residues 1-19 (MKKKALLPLFLGIMVFLAG). The N-palmitoyl cysteine moiety is linked to residue cysteine 20. The S-diacylglycerol cysteine moiety is linked to residue cysteine 20. 5 consecutive transmembrane segments (helical) span residues 56–76 (YGLAIIILVLVIRIILLPFML), 134–154 (MLGCLPMLIQLPIIMGLYFVL), 176–196 (PDIWITIIAGVLYFIQAYVSS), 207–224 (GYMMMVISPIMIIWISLS), and 229–251 (LGLYWSVSAAFLVVQTHFANIYY). The tract at residues 270–290 (HNGGSNKKGKNTQVVSKKKKK) is disordered.

The protein belongs to the OXA1/ALB3/YidC family. Type 2 subfamily.

The protein localises to the cell membrane. Required for the insertion and/or proper folding and/or complex formation of integral membrane proteins into the membrane. Involved in integration of membrane proteins that insert both dependently and independently of the Sec translocase complex, as well as at least some lipoproteins. The chain is Membrane protein insertase YidC from Staphylococcus aureus (strain Mu3 / ATCC 700698).